The sequence spans 587 residues: Kelch-like ECH-associated protein 1B (587 aa).

The BTB domain maps to 44-117; that stretch reads CDVTLRVRYC…AYTASISVGE (74 aa). Residues 153–253 enclose the BACK domain; that stretch reads IGIASFAEQI…LTPHFLQRQL (101 aa). 6 Kelch repeats span residues 292-337, 338-388, 389-435, 436-482, 484-529, and 530-576; these read LIYT…VISG, LLYA…VIDG, MIYA…VINR, LLYA…ALGN, IYVM…THHG, and RIYV…VTME.

It belongs to the KEAP1 family. Homodimer and heterodimer; heterodimerizes with keap1a. Component of the BCR(KEAP1) E3 ubiquitin ligase complex, at least composed of 2 molecules of cul3, 2 molecules of keap1 (keap1a and/or keap1b), and rbx1. Interacts with nfe2l2/nrf2; the interaction is direct. Non-enzymatic covalent modifications of reactive cysteines by electrophile metabolites inactivate the BCR(KEAP1) complex. Widely expressed.

The protein localises to the cytoplasm. It localises to the nucleus. It participates in protein modification; protein ubiquitination. Ubiquitin ligase activity of the BCR(KEAP1) complex is inhibited by oxidative stress and electrophile metabolites such as sulforaphane. Electrophile metabolites react with reactive cysteine residues in keap1 and trigger non-enzymatic covalent modifications of these cysteine residues, leading to inactivate the ubiquitin ligase activity of the BCR(KEAP1) complex. Its function is as follows. Substrate-specific adapter of a BCR (BTB-CUL3-RBX1) E3 ubiquitin ligase complex that regulates the response to oxidative stress by targeting nfe2l2/nrf2 for ubiquitination. Keap1 acts as a key sensor of oxidative and electrophilic stress: in normal conditions, the BCR(KEAP1) complex mediates ubiquitination and degradation of nfe2l2/nrf2, a transcription factor regulating expression of many cytoprotective genes. In response to oxidative stress, different electrophile metabolites trigger non-enzymatic covalent modifications of highly reactive cysteine residues in KEAP1, leading to inactivate the ubiquitin ligase activity of the BCR(KEAP1) complex, promoting nfe2l2/nrf2 nuclear accumulation and expression of phase II detoxifying enzymes. The protein is Kelch-like ECH-associated protein 1B of Danio rerio (Zebrafish).